Reading from the N-terminus, the 181-residue chain is Nedd8-conjugating enzyme UbcE2M (181 aa).

2 interaction with Uba3 regions span residues 4–7 and 24–54; these read LFTL and ASAA…PNDL. The UBC core domain occupies 26–170; sequence AAQLRIQKDI…VKKAMRGGCV (145 aa). The active-site Glycyl thioester intermediate is cysteine 108.

Belongs to the ubiquitin-conjugating enzyme family. UBC12 subfamily. In terms of assembly, interacts with Uba3. As to expression, expressed in the wing disk.

The enzyme catalyses [E1 NEDD8-activating enzyme]-S-[NEDD8 protein]-yl-L-cysteine + [E2 NEDD8-conjugating enzyme]-L-cysteine = [E1 NEDD8-activating enzyme]-L-cysteine + [E2 NEDD8-conjugating enzyme]-S-[NEDD8-protein]-yl-L-cysteine.. It functions in the pathway protein modification; protein neddylation. In terms of biological role, accepts the ubiquitin-like protein Nedd8 from the Uba3-APP-BP1 E1 complex and catalyzes its covalent attachment to other proteins. Required for Cul1 and Cul3 neddylation. Negatively regulates full-length ci stability and hedgehog signaling. This Drosophila melanogaster (Fruit fly) protein is Nedd8-conjugating enzyme UbcE2M.